Consider the following 254-residue polypeptide: uncharacterized protein (254 aa).

Catalysis depends on Cys-71, which acts as the Acyl-thioester intermediate. Residues His-110 and Asp-125 contribute to the active site.

It belongs to the arylamine N-acetyltransferase family.

This is an uncharacterized protein from Bacillus subtilis (strain 168).